The sequence spans 291 residues: uncharacterized protein (291 aa).

The next 10 membrane-spanning stretches (helical) occupy residues Met1 to Ala21, Ile26 to Leu46, Pro67 to Val87, Ser95 to His115, Thr117 to Leu137, Phe149 to Phe169, Phe179 to Phe199, Ser208 to Ile228, Val241 to Phe261, and Trp270 to Ile290. In terms of domain architecture, EamA spans Ile107–Thr138.

Its subcellular location is the cell membrane. This is an uncharacterized protein from Haemophilus influenzae (strain ATCC 51907 / DSM 11121 / KW20 / Rd).